The primary structure comprises 64 residues: Alpha-conotoxin Lt14.1 (64 aa).

Positions 1 to 20 (MKLSVMFIVFLMLTMPMTCA) are cleaved as a signal peptide. A propeptide spanning residues 21–50 (GISRSATNGGEADVRAHDKAANLMALLQER) is cleaved from the precursor. 2 disulfides stabilise this stretch: Cys-52/Cys-60 and Cys-56/Cys-63. A Cysteine amide modification is found at Cys-63.

It belongs to the conotoxin L superfamily. In terms of processing, may contain a 4-hydroxyproline. In terms of tissue distribution, expressed by the venom duct.

Its subcellular location is the secreted. In terms of biological role, alpha-conotoxins act on postsynaptic membranes, they bind to the nicotinic acetylcholine receptors (nAChR) and thus inhibit them. This synthetic peptide displays analgesic activity in a hot plate assay. Analgesia is also observed against second phase pain in formalin-induced inflammatory pain model, and in a rat model of mechanically-induced pain. Effects downstream of nAChR are inhibition of calcium influx, inhibition of ERK1/2 phosphorylation and inhibition of c-fos/NOS expression. Genes associated with drug dependence are not up-regulated by this toxin. Treatment with this toxin reversed morphine withdrawal symptoms in mice. The polypeptide is Alpha-conotoxin Lt14.1 (Conus litteratus (Lettered cone)).